We begin with the raw amino-acid sequence, 335 residues long: MWRLLATLSCLLVLTSARSSLYFPPLSDELVNFVNKQNTTWKAGHNFYNVDLSYVKKLCGAILGGPKLPQRDAFAADVVLPESFDAREQWPNCPTIKEIRDQGSCGSCWAFGAVEAISDRICIHSNGRVNVEVSAEDMLTCCGGECGDGCNGGFPSGAWNFWTKKGLVSGGLYNSHVGCRPYSIPPCEHHVNGSRPPCTGEGDTPKCSKTCEPGYSPSYKEDKHFGCSSYSVANNEKEIMAEIYKNGPVEGAFSVYSDFLLYKSGVYQHVSGEIMGGHAIRILGWGVENGTPYWLVGNSWNTDWGDNGFFKILRGQDHCGIESEIVAGMPCTHQY.

A signal peptide spans 1–17; sequence MWRLLATLSCLLVLTSA. Residues 18-79 constitute a propeptide, activation peptide; it reads RSSLYFPPLS…QRDAFAADVV (62 aa). Cystine bridges form between C93–C122, C105–C150, C141–C207, C142–C146, C179–C211, and C187–C198. The active site involves C108. The N-linked (GlcNAc...) asparagine glycan is linked to N192. K220 is modified (N6-acetyllysine). A disulfide bridge connects residues C227 and C331. Catalysis depends on residues H278 and N298. A propeptide spanning residues 333–335 is cleaved from the precursor; sequence HQY.

This sequence belongs to the peptidase C1 family. In terms of assembly, dimer of a heavy chain and a light chain cross-linked by a disulfide bond. Interacts with SRPX2. Directly interacts with SHKBP1. As to expression, expressed in myoblasts, the myotube, fibroblasts and fetal muscle (at protein level). Expressed in the spleen (at protein level).

Its subcellular location is the lysosome. It localises to the melanosome. The protein resides in the secreted. The protein localises to the extracellular space. It is found in the apical cell membrane. It carries out the reaction Hydrolysis of proteins with broad specificity for peptide bonds. Preferentially cleaves -Arg-Arg-|-Xaa bonds in small molecule substrates (thus differing from cathepsin L). In addition to being an endopeptidase, shows peptidyl-dipeptidase activity, liberating C-terminal dipeptides.. In terms of biological role, thiol protease which is believed to participate in intracellular degradation and turnover of proteins. Cleaves matrix extracellular phosphoglycoprotein MEPE. Involved in the solubilization of cross-linked TG/thyroglobulin in the thyroid follicle lumen. Has also been implicated in tumor invasion and metastasis. The polypeptide is Cathepsin B (CTSB) (Bos taurus (Bovine)).